Reading from the N-terminus, the 168-residue chain is Gastrula zinc finger protein XlCGF7.1 (168 aa).

6 consecutive C2H2-type zinc fingers follow at residues 6–28, 34–56, 62–84, 90–112, 118–140, and 146–168; these read FTCT…QRTH, FTCT…LKCH, FMCT…RKIH, YICT…QTVH, FTCS…QKIH, and FKCN…ERIH.

Belongs to the krueppel C2H2-type zinc-finger protein family.

Its subcellular location is the nucleus. May be involved in transcriptional regulation. This is Gastrula zinc finger protein XlCGF7.1 from Xenopus laevis (African clawed frog).